Consider the following 68-residue polypeptide: UPF0337 protein RB10934 (68 aa).

Belongs to the UPF0337 (CsbD) family.

The polypeptide is UPF0337 protein RB10934 (Rhodopirellula baltica (strain DSM 10527 / NCIMB 13988 / SH1)).